The primary structure comprises 1078 residues: Extracellular calcium-sensing receptor (1078 aa).

Positions 1–19 (MAFYSCCWVLLALTWHTSA) are cleaved as a signal peptide. At 20-610 (YGPDQRAQKK…KEIEFLSWTE (591 aa)) the chain is on the extracellular side. Residues 22–188 (PDQRAQKKGD…QFKSFLRTIP (167 aa)) form a ligand-binding 1 (LB1) region. Cys60 and Cys101 are joined by a disulfide. 66 to 70 (RGFRW) contributes to the phosphate binding site. Ca(2+) contacts are provided by Ile81, Ser84, Leu87, and Leu88. Residue Asn90 is glycosylated (N-linked (GlcNAc...) asparagine). Thr100 contributes to the Ca(2+) binding site. A glycan (N-linked (GlcNAc...) asparagine) is linked at Asn130. Thr145 is a binding site for Ca(2+). L-tryptophan contacts are provided by Ser147, Ala168, and Ser170. The Ca(2+) site is built by Ser170, Pro188, Asp190, Glu231, and Asp234. The ligand-binding 2 (LB2) stretch occupies residues 189 to 324 (NDEHQATAMA…GGTIGFALKA (136 aa)). 7 disulfide bridges follow: Cys236–Cys561, Cys358–Cys395, Cys437–Cys449, Cys542–Cys562, Cys546–Cys565, Cys568–Cys582, and Cys585–Cys598. Residues Asp238 and Ser240 each coordinate spermine. Residues Asn261 and Asn287 are each glycosylated (N-linked (GlcNAc...) asparagine). Glu297 lines the Ca(2+) pocket. Residue Glu297 participates in L-tryptophan binding. N-linked (GlcNAc...) asparagine glycosylation is found at Asn386 and Asn400. 415-417 (RIS) is a phosphate binding site. N-linked (GlcNAc...) asparagine glycans are attached at residues Asn446, Asn468, and Asn488. Tyr489 is a binding site for Ca(2+). Asn541 carries N-linked (GlcNAc...) asparagine glycosylation. Residues 542–612 (CSRDCLAGTR…IEFLSWTEPF (71 aa)) are cysteine-rich (CR). A Ca(2+)-binding site is contributed by Gly557. The N-linked (GlcNAc...) asparagine glycan is linked to Asn594. Residues 611-636 (PFGIALTLFAVLGIFLTAFVLGVFIK) traverse the membrane as a helical segment. The Cytoplasmic portion of the chain corresponds to 637 to 648 (FRNTPIVKATNR). Positions 637 to 648 (FRNTPIVKATNR) are intracellular loop 1 (ICL1). Residues 649–668 (ELSYLLLFSLLCCFSSSLFF) form a helical membrane-spanning segment. The Extracellular portion of the chain corresponds to 669–674 (IGEPQD). A helical transmembrane segment spans residues 675-698 (WTCRLRQPAFGISFVLCISCILVK). The Cytoplasmic segment spans residues 699-722 (TNRVLLVFEAKIPTSFHRKWWGLN). Residues 699–722 (TNRVLLVFEAKIPTSFHRKWWGLN) are intracellular loop 2 (ICL2). Residues 723-745 (LQFLLVFLCTFMQIVICVIWLYT) form a helical membrane-spanning segment. Topologically, residues 746–769 (APPSSYRNQELEDEIIFITCHEGS) are extracellular. A helical membrane pass occupies residues 770 to 789 (LMALGFLIGYTCLLAAICFF). Residues 790 to 805 (FAFKSRKLPENFNEAK) lie on the Cytoplasmic side of the membrane. Positions 790-805 (FAFKSRKLPENFNEAK) are intracellular loop 3 (ICL3). The chain crosses the membrane as a helical span at residues 806 to 828 (FITFSMLIFFIVWISFIPAYAST). The Extracellular segment spans residues 829–832 (YGKF). Residues 833–854 (VSAVEVIAILAASFGLLACIFF) form a helical membrane-spanning segment. Residues 855 to 1078 (NKIYIILFKP…STVTENVVNS (224 aa)) lie on the Cytoplasmic side of the membrane. Residues 855 to 1078 (NKIYIILFKP…STVTENVVNS (224 aa)) are C-terminus. The interaction with RNF19A stretch occupies residues 880-900 (AFKVAARATLRRSNVSRKRSS). At Thr888 the chain carries Phosphothreonine; by PKC. Residues 890 to 898 (RRSNVSRKR) are arginine-rich retention motif. At Ser892 the chain carries Phosphoserine; by PKC. Disordered stretches follow at residues 892-963 (SNVS…PRCK), 986-1006 (AMAH…SSDT), and 1030-1055 (TGLQ…PALV). Ser899 is modified (phosphoserine; by PKA). Positions 900–918 (SSLGGSTGSTPSSSISSKS) are enriched in low complexity. Ser920 carries the phosphoserine modification. The segment covering 932–960 (QQQPLALTQQEQQQQPLTLPQQQRSQQQP) has biased composition (low complexity). The span at 993-1006 (THQNSLEAQKSSDT) shows a compositional bias: polar residues. Residue Ser1061 is modified to Phosphoserine.

It belongs to the G-protein coupled receptor 3 family. As to quaternary structure, homodimer; disulfide-linked. Interacts with VCP. Interacts with ARRB1. Post-translationally, phosphorylation at Thr-888 by PKC impairs coupling with G(q)/G(11) G-proteins, while it does not affect G(i)/G(o)-coupling. Phosphorylation at Ser-892 by PKC and Ser-899 by PKA promote plasma membrane localization. Ubiquitinated by RNF19A; which induces proteasomal degradation. In terms of processing, N-glycosylated. Expressed in the temporal lobe, frontal lobe, parietal lobe, hippocampus, and cerebellum. Also found in kidney, lung, liver, heart, skeletal muscle, placenta.

The protein resides in the cell membrane. Its activity is regulated as follows. In resting state, adopts an open conformation, anion-binding promoting the inactive configuration. Upon aromatic amino acid-binding, the groove in the extracellular venus flytrap module is closed, thereby inducing the formation of a novel homodimer interface between subunits. Calcium ions stabilize the active state by enhancing homodimer interactions between membrane-proximal domains to fully activate the receptor. Upon activation, the homodimer adopts an asymmetric configuration of the 7-transmembrane region that primes one protomer for G-protein coupling. G-protein binding expands the transmembrane dimer interface; the restriction imposed by the receptor dimer, in combination with intracellular loop 2 (ICL2), enables G-protein activation by facilitating conformational transition of G-protein alpha. Coupling to different classes of G-proteins results in distinct CASR-G-protein interfaces. Activated by glucose, which acts as a positive allosteric modulator. Activated by positive allosteric modulator drugs cinacalcet, evocalcet and etelcalcetide, which are clinically used for the treatment of hyperparathyroidism and familial hypocalciuric hypercalcemia. Inhibited by NPS-2143, a negative allosteric modulator tested for the treatment of hypocalcemia. Activated by velcalcetide (AMG 416), a D-amino acid-containing peptide agonist that is being evaluated for the treatment of secondary hyperparathyroidism in chronic kidney disease patients receiving hemodialysis. Velcalcetide agonist acts by forming a disulfide bond with Cys-482. G-protein-coupled receptor that senses changes in the extracellular concentration of calcium ions and plays a key role in maintaining calcium homeostasis. Senses fluctuations in the circulating calcium concentration: activated by elevated circulating calcium, leading to decreased parathyroid hormone (PTH) secretion in parathyroid glands. In kidneys, acts as a key regulator of renal tubular calcium resorption. Ligand binding causes a conformation change that triggers signaling via guanine nucleotide-binding proteins (G-proteins) and modulates the activity of downstream effectors. CASR is coupled with different G(q)/G(11), G(i)/G(o)- or G(s)-classes of G-proteins depending on the context. In the parathyroid and kidney, CASR signals through G(q)/G(11) and G(i)/G(o) G-proteins: G(q)/G(11) coupling activates phospholipase C-beta, releasing diacylglycerol (DAG) and inositol 1,4,5-trisphosphate (IP3) second messengers, while G(i)/G(o) coupling mediates inhibition of adenylate cyclase activity. The G-protein-coupled receptor activity is activated by a co-agonist mechanism: aromatic amino acids, such as Trp or Phe, act concertedly with divalent cations, such as calcium or magnesium, to achieve full receptor activation. Acts as an activator of the NLRP3 inflammasome via G(i)/G(o)-mediated signaling: down-regulation of cyclic AMP (cAMP) relieving NLRP3 inhibition by cAMP. Acts as a regulator of proton-sensing receptor GPR68 in a seesaw manner: CASR-mediated signaling inhibits GPR68 signaling in response to extracellular calcium, while GPR68 inhibits CASR in presence of extracellular protons. This chain is Extracellular calcium-sensing receptor, found in Homo sapiens (Human).